A 174-amino-acid polypeptide reads, in one-letter code: Disulfide bond formation protein B (174 aa).

Topologically, residues 1–12 (MLNWIDTAPRRI) are cytoplasmic. A helical transmembrane segment spans residues 13-29 (LALISAACVAMLAFGMY). The Periplasmic portion of the chain corresponds to 30–47 (LQHVVGLEPCPMCIVQRY). Cysteines 39 and 42 form a disulfide. Residues 48–64 (ALIGVAVFAGLASARGQ) form a helical membrane-spanning segment. The Cytoplasmic portion of the chain corresponds to 65-69 (KGWWM). The chain crosses the membrane as a helical span at residues 70-87 (TWSVLALVAAGFGAFVAA). Topologically, residues 88–143 (RQSWLQWYPPEIATCGRDFYGMIENYPISRAIPMIFRGSGDCTAVDWTFLGGSIAN) are periplasmic. Cysteines 102 and 129 form a disulfide. A helical membrane pass occupies residues 144 to 162 (WSFVWFLLFAVLLLVLLVR). Residues 163 to 174 (GGRGAPDTLARA) lie on the Cytoplasmic side of the membrane.

This sequence belongs to the DsbB family.

Its subcellular location is the cell inner membrane. Its function is as follows. Required for disulfide bond formation in some periplasmic proteins. Acts by oxidizing the DsbA protein. This is Disulfide bond formation protein B from Acidovorax sp. (strain JS42).